The chain runs to 402 residues: Prostaglandin E2 receptor EP1 subtype (402 aa).

Residues 1–35 (MSPCGPLNLSLAGEATTCAAPWVPNTSAVPPSGAS) lie on the Extracellular side of the membrane. 2 N-linked (GlcNAc...) asparagine glycosylation sites follow: Asn-8 and Asn-25. Residues 36-62 (PALPIFSMTLGAVSNLLALALLAQAAG) traverse the membrane as a helical segment. The Cytoplasmic portion of the chain corresponds to 63-72 (RLRRRRSAAT). The chain crosses the membrane as a helical span at residues 73–96 (FLLFVASLLATDLAGHVIPGALVL). Topologically, residues 97–111 (RLYTAGRAPAGGACH) are extracellular. The cysteines at positions 110 and 188 are disulfide-linked. A helical membrane pass occupies residues 112 to 133 (FLGGCMVFFGLCPLLLGCGMAV). Residues 134-155 (ERCVGVTRPLLHAARVSVARAR) are Cytoplasmic-facing. Residues 156–177 (LALAAVAAVALAVALLPLARVG) traverse the membrane as a helical segment. At 178-201 (RYELQYPGTWCFIGLGPPGGWRQA) the chain is on the extracellular side. A helical membrane pass occupies residues 202–227 (LLAGLFASLGLVALLAALVCNTLSGL). Residues 228–294 (ALLRARWRRR…ARRARAHDVE (67 aa)) are Cytoplasmic-facing. The interval 238–266 (SRRPPPASGPDSRRRWGAHGPRSASASSA) is disordered. A helical transmembrane segment spans residues 295-321 (MVGQLVGIMVVSCICWSPMLVLVALAV). Residues 322–332 (GGWSSTSLQRP) are Extracellular-facing. Residues 333–354 (LFLAVRLASWNQILDPWVYILL) traverse the membrane as a helical segment. Over 355–402 (RQAVLRQLLRLLPPRAGAKGGPAGLGLTPSAWEASSLRSSRHSGLSHF) the chain is Cytoplasmic.

It belongs to the G-protein coupled receptor 1 family. Post-translationally, phosphorylated. In terms of tissue distribution, abundant in kidney. Lower level expression in lung, skeletal muscle and spleen, lowest expression in testis and not detected in liver brain and heart.

It is found in the cell membrane. Receptor for prostaglandin E2 (PGE2). The activity of this receptor is mediated by G(q) proteins which activate a phosphatidylinositol-calcium second messenger system. May play a role as an important modulator of renal function. Implicated the smooth muscle contractile response to PGE2 in various tissues. This chain is Prostaglandin E2 receptor EP1 subtype (PTGER1), found in Homo sapiens (Human).